The sequence spans 215 residues: Cytochrome b6 (215 aa).

Residues 32–52 (IFYCLGGITLTCFLVQVATGF) form a helical membrane-spanning segment. Residue Cys-35 participates in heme c binding. His-86 and His-100 together coordinate heme b. 3 consecutive transmembrane segments (helical) span residues 90 to 110 (ASMM…TGGF), 116 to 136 (LTWV…VTGY), and 186 to 206 (LHTF…FLMI). The heme b site is built by His-187 and His-202.

The protein belongs to the cytochrome b family. PetB subfamily. As to quaternary structure, the 4 large subunits of the cytochrome b6-f complex are cytochrome b6, subunit IV (17 kDa polypeptide, PetD), cytochrome f and the Rieske protein, while the 4 small subunits are PetG, PetL, PetM and PetN. The complex functions as a dimer. Requires heme b as cofactor. The cofactor is heme c.

It is found in the plastid. The protein localises to the chloroplast thylakoid membrane. Component of the cytochrome b6-f complex, which mediates electron transfer between photosystem II (PSII) and photosystem I (PSI), cyclic electron flow around PSI, and state transitions. This Pinus koraiensis (Korean pine) protein is Cytochrome b6.